A 194-amino-acid polypeptide reads, in one-letter code: Small ribosomal subunit protein uS7 (194 aa).

Belongs to the universal ribosomal protein uS7 family. As to quaternary structure, part of the 30S ribosomal subunit.

Functionally, one of the primary rRNA binding proteins, it binds directly to 16S rRNA where it nucleates assembly of the head domain of the 30S subunit. Is located at the subunit interface close to the decoding center. The sequence is that of Small ribosomal subunit protein uS7 from Methanococcus vannielii (strain ATCC 35089 / DSM 1224 / JCM 13029 / OCM 148 / SB).